We begin with the raw amino-acid sequence, 57 residues long: UPF0391 membrane protein azo1765 (57 aa).

Transmembrane regions (helical) follow at residues 1 to 21 and 33 to 53; these read MIKW…FGFT and VLFF…VGLG.

This sequence belongs to the UPF0391 family.

The protein localises to the cell membrane. The sequence is that of UPF0391 membrane protein azo1765 from Azoarcus sp. (strain BH72).